The chain runs to 171 residues: Lipoprotein signal peptidase (171 aa).

3 helical membrane-spanning segments follow: residues 7–27 (GLIALLATLALDQASKLWLYF), 64–84 (LGRWLLVAVSLAAVIGLSVWM), and 88–108 (GSRLLAVALGLIVGGALGNAI). Active-site residues include aspartate 118 and aspartate 136. Residues 128 to 148 (SWYVFNVADAAIVAGVVGLIL) form a helical membrane-spanning segment.

Belongs to the peptidase A8 family.

It is found in the cell inner membrane. It catalyses the reaction Release of signal peptides from bacterial membrane prolipoproteins. Hydrolyzes -Xaa-Yaa-Zaa-|-(S,diacylglyceryl)Cys-, in which Xaa is hydrophobic (preferably Leu), and Yaa (Ala or Ser) and Zaa (Gly or Ala) have small, neutral side chains.. Its pathway is protein modification; lipoprotein biosynthesis (signal peptide cleavage). Its function is as follows. This protein specifically catalyzes the removal of signal peptides from prolipoproteins. The chain is Lipoprotein signal peptidase from Methylorubrum extorquens (strain PA1) (Methylobacterium extorquens).